The following is a 625-amino-acid chain: Probable potassium transport system protein Kup 2 (625 aa).

12 consecutive transmembrane segments (helical) span residues 15–35, 52–72, 98–118, 134–154, 164–184, 212–232, 246–266, 284–304, 336–356, 365–385, 394–414, and 417–437; these read LSFAALGVVFGDIGTSPLYAF, ILSLIFWSLIIIVSIKYLVIV, GGWLLFITLVGIGLIIGDGML, LSPNLAKYVLPVTLIILFFLF, IGVYFAPVMLVWFITIGILGF, LALFILGGVFLVMTGGEALFA, WFAVALPALLLCYFGQGALVL, FLPVMIILATLATIIASQAII, VYLPLINFILALGTCSLVVIF, AYGIAVNLDMLITTVLVGIIA, FKILIFLLILIIELAFFAGNI, and LLTGGWIPILIAFLGFVVMYT.

It belongs to the HAK/KUP transporter (TC 2.A.72) family.

The protein resides in the cell inner membrane. The catalysed reaction is K(+)(in) + H(+)(in) = K(+)(out) + H(+)(out). Functionally, transport of potassium into the cell. Likely operates as a K(+):H(+) symporter. In Legionella pneumophila (strain Corby), this protein is Probable potassium transport system protein Kup 2.